The sequence spans 293 residues: MTNQQDYTQDNDKLYRYLFQHRAVRGEWVRLNKTFTDTLNTHQYPKAVQDLLGEMMVATNLLTATLKFAGNITVQIQGDGPLRLALVNGNDQQQIRALARVDGNITENMSLHNMIGKGVLVITIAPKEGERYQGVISLDKPTITECLEDYFVRSEQLQTQLIIRTGEYEGKPVAAGMLLQIMPDGSGTPEDFEHLTTLAATVKDEELFGLPAEELLYRLYHEETVNLYPAQDVQFFCGCSAERSSSALLLISDEEIDEILAEHKGSIDMQCECCGTHYFFNKEAIEKLKSTRV.

2 disulfide bridges follow: Cys-237–Cys-239 and Cys-271–Cys-274.

This sequence belongs to the HSP33 family. Post-translationally, under oxidizing conditions two disulfide bonds are formed involving the reactive cysteines. Under reducing conditions zinc is bound to the reactive cysteines and the protein is inactive.

It localises to the cytoplasm. Its function is as follows. Redox regulated molecular chaperone. Protects both thermally unfolding and oxidatively damaged proteins from irreversible aggregation. Plays an important role in the bacterial defense system toward oxidative stress. In Haemophilus influenzae (strain 86-028NP), this protein is 33 kDa chaperonin.